Reading from the N-terminus, the 310-residue chain is Putrescinyltransferase (310 aa).

It belongs to the thymidine aminotransferase family.

The catalysed reaction is 5-phosphomethyl-dUMP in DNA + putrescine = 5-N(alpha)-putrescinyl-dTMP in DNA + phosphate. In terms of biological role, transfers putrescine to 5-phosphomethyl-2'-deoxyuridine (5-PmdU) to produce 5-Nalpha-putrescinylthymidine (Nalpha-PutT) as a step in the pathway leading to thymidine hypermodifications in the viral genome. As a final result of the pathway of hypermodification, Nalpha-PutT substitutes for about 50% of thymidines in the viral DNA. These modifications probably prevent degradation of viral genome by the host restriction-modification antiviral defense system. In Delftia phage PhiW-14 (Deftia acidovorans bacteriophage phiW-14), this protein is Putrescinyltransferase.